The primary structure comprises 248 residues: 3-deoxy-manno-octulosonate cytidylyltransferase (248 aa).

The protein belongs to the KdsB family.

The protein resides in the cytoplasm. The enzyme catalyses 3-deoxy-alpha-D-manno-oct-2-ulosonate + CTP = CMP-3-deoxy-beta-D-manno-octulosonate + diphosphate. It functions in the pathway nucleotide-sugar biosynthesis; CMP-3-deoxy-D-manno-octulosonate biosynthesis; CMP-3-deoxy-D-manno-octulosonate from 3-deoxy-D-manno-octulosonate and CTP: step 1/1. It participates in bacterial outer membrane biogenesis; lipopolysaccharide biosynthesis. Activates KDO (a required 8-carbon sugar) for incorporation into bacterial lipopolysaccharide in Gram-negative bacteria. The polypeptide is 3-deoxy-manno-octulosonate cytidylyltransferase (Erwinia tasmaniensis (strain DSM 17950 / CFBP 7177 / CIP 109463 / NCPPB 4357 / Et1/99)).